The primary structure comprises 122 residues: Small ribosomal subunit protein uS13 (122 aa).

The segment at 99 to 122 is disordered; the sequence is RGQRTHTNARTRKGPAKAIAGKKK.

It belongs to the universal ribosomal protein uS13 family. Part of the 30S ribosomal subunit. Forms a loose heterodimer with protein S19. Forms two bridges to the 50S subunit in the 70S ribosome.

In terms of biological role, located at the top of the head of the 30S subunit, it contacts several helices of the 16S rRNA. In the 70S ribosome it contacts the 23S rRNA (bridge B1a) and protein L5 of the 50S subunit (bridge B1b), connecting the 2 subunits; these bridges are implicated in subunit movement. Contacts the tRNAs in the A and P-sites. This is Small ribosomal subunit protein uS13 from Rhodopseudomonas palustris (strain TIE-1).